Reading from the N-terminus, the 340-residue chain is Chorismate mutase 1, chloroplastic (340 aa).

The transit peptide at 1–65 directs the protein to the chloroplast; sequence MEASLLMRSS…KPRSGTSSVH (65 aa). Residue A66 is modified to N-acetylalanine. L-phenylalanine is bound at residue R79. The region spanning 79–340 is the Chorismate mutase domain; it reads RVDESESLTL…QVEYLLRRLD (262 aa). L-tyrosine contacts are provided by residues R150 and 211–214; that span reads NYGS. 211–214 is a binding site for L-phenylalanine; it reads NYGS.

In terms of assembly, homodimer. In terms of tissue distribution, expressed in roots, shoots, rosette leaves, stems, cauline leaves, flowers and siliques.

The protein localises to the plastid. Its subcellular location is the chloroplast. The catalysed reaction is chorismate = prephenate. The protein operates within metabolic intermediate biosynthesis; prephenate biosynthesis; prephenate from chorismate: step 1/1. With respect to regulation, allosterically inhibited by tyrosine and phenylalanine. Activated by tryptophan. May play a role in chloroplast biogenesis. This chain is Chorismate mutase 1, chloroplastic, found in Arabidopsis thaliana (Mouse-ear cress).